A 494-amino-acid chain; its full sequence is Cobyric acid synthase (494 aa).

The 195-residue stretch at 249–443 folds into the GATase cobBQ-type domain; it reads EINVTILRLP…LHGIFDNGAW (195 aa). Residue cysteine 330 is the Nucleophile of the active site. Histidine 435 is a catalytic residue.

The protein belongs to the CobB/CobQ family. CobQ subfamily.

The protein operates within cofactor biosynthesis; adenosylcobalamin biosynthesis. Its function is as follows. Catalyzes amidations at positions B, D, E, and G on adenosylcobyrinic A,C-diamide. NH(2) groups are provided by glutamine, and one molecule of ATP is hydrogenolyzed for each amidation. In Crocosphaera subtropica (strain ATCC 51142 / BH68) (Cyanothece sp. (strain ATCC 51142)), this protein is Cobyric acid synthase.